The following is a 965-amino-acid chain: Probable ion channel POLLUX (965 aa).

The segment covering 1-11 (MAESDGGEASP) has biased composition (low complexity). 2 disordered regions span residues 1 to 76 (MAES…APRG) and 108 to 158 (GPHA…KSLA). Residues 32-42 (LTKSRTISGSA) are compositionally biased toward polar residues. Composition is skewed to low complexity over residues 52–66 (SNSS…SSTA) and 118–149 (RSQQ…ASVS). A run of 4 helical transmembrane segments spans residues 187–207 (LSPY…LAIW), 251–271 (ADWN…VFLV), 317–337 (LALL…LYVV), and 369–389 (IVSV…LGLV). RCK N-terminal domains lie at 410–551 (VNHI…ETVV) and 670–818 (PEKI…DKSI).

This sequence belongs to the castor/pollux (TC 1.A.1.23) family. In terms of tissue distribution, expressed in roots, leaves, stems and panicles.

It is found in the nucleus membrane. Required for mycorrhizal symbiosis. The chain is Probable ion channel POLLUX from Oryza sativa subsp. japonica (Rice).